The primary structure comprises 58 residues: Large ribosomal subunit protein bL32 (58 aa).

Disordered regions lie at residues 1–22 (MAVP…HWKR) and 39–58 (LSGR…DDEE).

Belongs to the bacterial ribosomal protein bL32 family.

The chain is Large ribosomal subunit protein bL32 from Crocosphaera subtropica (strain ATCC 51142 / BH68) (Cyanothece sp. (strain ATCC 51142)).